The primary structure comprises 1904 residues: Voltage-dependent calcium channel type A subunit alpha-1 (1904 aa).

Residues 1-45 are disordered; the sequence is MLGGVGGRHMSTRRRGSSPLVRGGAGLTGYAGPGASGNSNDVAAI. A compositionally biased stretch (gly residues) spans 23–35; it reads GGAGLTGYAGPGA. Topologically, residues 30–168 are cytoplasmic; it reads YAGPGASGNS…KHTRFIIEWP (139 aa). The I repeat unit spans residues 155-447; that stretch reads NCIRKHTRFI…LVLGVLSGEF (293 aa). The chain crosses the membrane as a helical span at residues 169–187; it reads PFEYAVLLTIIANCVVLAL. Over 188–205 the chain is Extracellular; the sequence is EEHLPKQDKTILAQKLEA. The helical transmembrane segment at 206–225 threads the bilayer; that stretch reads TEIYFLGIFCVEASLKILAL. At 226–237 the chain is on the cytoplasmic side; it reads GFVLHRGSYLRN. The chain crosses the membrane as a helical span at residues 238–259; that stretch reads IWNIMDFFVVVTGFITAFSQGI. The Extracellular segment spans residues 260–264; the sequence is ELDMD. A helical membrane pass occupies residues 265 to 283; the sequence is LRTLRAIRVLRPLKLVSGI. Topologically, residues 284–302 are cytoplasmic; the sequence is PSLQVVLKSIIKAMAPLLQ. The helical transmembrane segment at 303–322 threads the bilayer; that stretch reads IGLLVLFAIVIFAIIGLEFY. Residues 323–419 are Extracellular-facing; the sequence is SGTLHKTCYS…WTNDALGSTY (97 aa). Residues Asn353 and Asn367 are each glycosylated (N-linked (GlcNAc...) asparagine). Residues 420–444 form a helical membrane-spanning segment; the sequence is NWIYFIPLIVLGSFFMLNLVLGVLS. At 445 to 568 the chain is on the cytoplasmic side; that stretch reads GEFAKEREKV…YWIRKSVKSQ (124 aa). The disordered stretch occupies residues 513 to 543; that stretch reads KKLGKSKSTDTEEEEGDDDQDDGELSSSTKE. Positions 523–536 are enriched in acidic residues; sequence TEEEEGDDDQDDGE. One copy of the II repeat lies at 554–797; that stretch reads EKRFRYWIRK…VFLAIAVDNL (244 aa). Residues 569–587 traverse the membrane as a helical segment; that stretch reads KFYWFVIVLVFFNTVCVAV. The Extracellular segment spans residues 588–602; sequence EHYGQPQWLTDFLYF. A helical membrane pass occupies residues 603–622; the sequence is AEFVFLALFMLEMFIKVYAL. Residues 623–630 are Cytoplasmic-facing; sequence GPRTYFDS. The helical transmembrane segment at 631–649 threads the bilayer; the sequence is SFNRFDCVVISGSIFEVIW. Residues 650–658 lie on the Extracellular side of the membrane; sequence SEVKSGSFG. Residues 659-677 traverse the membrane as a helical segment; sequence LSVLRALRLLRIFKVTKYW. Residues 678 to 696 lie on the Cytoplasmic side of the membrane; sequence KSLRNLVISLLSSMRSIIS. Residues 697-716 traverse the membrane as a helical segment; the sequence is LLFLLFLFILIFALLGMQLF. The Extracellular portion of the chain corresponds to 717 to 769; that stretch reads GGQFNFDSGTPPTNFNTFPIALLTVFQILTGEDWNEVMYQGIESQGGHKKGMI. Residues 770-794 traverse the membrane as a helical segment; it reads YSLYFIVLVLFGNYTLLNVFLAIAV. The Cytoplasmic portion of the chain corresponds to 795 to 895; that stretch reads DNLANAQELS…VRRAAHWVVN (101 aa). Positions 827–869 are disordered; the sequence is QSLQNPKDGGAPKVEICPPNGKGGKQSSEEEKKQDEDDDTGPK. The III repeat unit spans residues 890 to 1177; the sequence is AHWVVNLRYF…IITFQEQGEA (288 aa). Residues 896–914 traverse the membrane as a helical segment; it reads LRYFDFFIMVVISLSSIAL. Residues 915–930 lie on the Extracellular side of the membrane; it reads AAEDPVWEDSPRNEVL. The helical transmembrane segment at 931–950 threads the bilayer; sequence NYFDYAFTGVFTVEMILKII. The Cytoplasmic segment spans residues 951–962; it reads DLGIILHPGSYL. A helical transmembrane segment spans residues 963-981; that stretch reads REFWNIMDAVVVICAAVSF. The Extracellular portion of the chain corresponds to 982-994; that stretch reads AFDMTGSSAGQNL. An N-linked (GlcNAc...) asparagine glycan is attached at Asn993. A helical transmembrane segment spans residues 995 to 1013; the sequence is STIKSLRVLRVLRPLKTIK. Residues 1014-1032 lie on the Cytoplasmic side of the membrane; it reads RVPKLKAVFDCVVNSLKNV. A helical transmembrane segment spans residues 1033-1052; sequence INILIVYILFQFIFAVIAVQ. Residues 1053–1141 are Extracellular-facing; the sequence is LFNGKFFYCS…EDKGPIQNFR (89 aa). A helical transmembrane segment spans residues 1142–1166; the sequence is IEMSIFYIVYFIVFPFFFVNIFVAL. At 1167 to 1221 the chain is on the cytoplasmic side; sequence IIITFQEQGEAELQDGEIDKNQKSCIDFTIQARPLERYMPKERNSVKYKIWRIVV. An IV repeat occupies 1214-1470; it reads YKIWRIVVST…DNFDYLTRDS (257 aa). Residues 1222 to 1250 traverse the membrane as a helical segment; it reads STPFEYFIMGLIVLNTVLLMMKFHRQSDA. Over 1251 to 1255 the chain is Extracellular; sequence YKNTL. Residues 1256-1275 form a helical membrane-spanning segment; it reads KYMNMCFTGMFTVECILKIA. The Cytoplasmic segment spans residues 1276–1283; it reads AFGVRNFF. A helical transmembrane segment spans residues 1284–1302; it reads KDAWNTFDFITVIGSIVDA. At 1303–1309 the chain is on the extracellular side; that stretch reads LVIEFGE. Residues 1310–1328 form a helical membrane-spanning segment; the sequence is NFINVGFLRLFRAARLIKL. Residues 1329-1347 are Cytoplasmic-facing; that stretch reads LRQGYTIRILLWTFVQSFK. A helical membrane pass occupies residues 1348–1367; sequence ALPYVCLLIAMLFFIYAIIG. Residues 1368–1431 are Extracellular-facing; the sequence is MQVFGNIALD…AKAGKQEGGC (64 aa). Positions 1430-1471 are phenylalkylamine binding; it reads GCGSNIAYAYFVSFIFFCSFLMLNLFVAVIMDNFDYLTRDSS. Residues 1432 to 1456 traverse the membrane as a helical segment; it reads GSNIAYAYFVSFIFFCSFLMLNLFV. Over 1457-1904 the chain is Cytoplasmic; the sequence is AVIMDNFDYL…HSDSDEDDWC (448 aa). Residues 1476-1511 form the EF-hand domain; the sequence is HHLDEFVRIWAEYDPNATGKIHYTEMYDMLKNMDPP. Ca(2+) is bound by residues Asp1489, Asn1491, Thr1493, Lys1495, and Glu1500. 3 disordered regions span residues 1652-1694, 1710-1788, and 1870-1904; these read THTG…HEGP, THHP…HSYP, and GGRLLPSPVPNGYKPQPQAKQRTPRHSDSDEDDWC. Low complexity predominate over residues 1670–1681; the sequence is RSPSLRHSPGRP. Over residues 1682 to 1691 the composition is skewed to basic and acidic residues; the sequence is GYDHHGHYYH. The segment covering 1710–1725 has biased composition (basic residues); that stretch reads THHPHPSQYNHRHRMR. Residues 1727-1740 show a composition bias toward low complexity; it reads PWSASTSPARTPSP. A compositionally biased stretch (polar residues) spans 1751 to 1762; sequence GTTSLEQRSRSP. A compositionally biased stretch (basic residues) spans 1771 to 1784; sequence PHTHQHYHRHHPHQ.

The protein belongs to the calcium channel alpha-1 subunit (TC 1.A.1.11) family. CACNA1I subfamily. In terms of assembly, interacts with CATSPER1 and CATSPER2, leading to suppress T-type calcium channel activity.

Its subcellular location is the membrane. Voltage-sensitive calcium channels (VSCC) mediate the entry of calcium ions into excitable cells and are also involved in a variety of calcium-dependent processes, including muscle contraction, neurotransmitter release, gene expression, cell motility, cell division and cell death. This is Voltage-dependent calcium channel type A subunit alpha-1 (CAC) from Apis mellifera (Honeybee).